The primary structure comprises 387 residues: Succinate--CoA ligase [ADP-forming] subunit beta (387 aa).

In terms of domain architecture, ATP-grasp spans 9-236 (KELFAKHNVP…RDATDPLELK (228 aa)). Residues Lys-45, 52–54 (GRG), Ser-94, and Glu-99 each bind ATP. Residues Asn-191 and Asp-205 each contribute to the Mg(2+) site. Residues Asn-256 and 318–320 (GIT) contribute to the substrate site.

It belongs to the succinate/malate CoA ligase beta subunit family. In terms of assembly, heterotetramer of two alpha and two beta subunits. It depends on Mg(2+) as a cofactor.

The catalysed reaction is succinate + ATP + CoA = succinyl-CoA + ADP + phosphate. It catalyses the reaction GTP + succinate + CoA = succinyl-CoA + GDP + phosphate. Its pathway is carbohydrate metabolism; tricarboxylic acid cycle; succinate from succinyl-CoA (ligase route): step 1/1. In terms of biological role, succinyl-CoA synthetase functions in the citric acid cycle (TCA), coupling the hydrolysis of succinyl-CoA to the synthesis of either ATP or GTP and thus represents the only step of substrate-level phosphorylation in the TCA. The beta subunit provides nucleotide specificity of the enzyme and binds the substrate succinate, while the binding sites for coenzyme A and phosphate are found in the alpha subunit. In Mycolicibacterium smegmatis (strain ATCC 700084 / mc(2)155) (Mycobacterium smegmatis), this protein is Succinate--CoA ligase [ADP-forming] subunit beta.